The chain runs to 230 residues: 7-cyano-7-deazaguanine synthase (230 aa).

ATP is bound at residue 14–24 (LSGGLDSTTTL). Residues C194, C204, C207, and C210 each contribute to the Zn(2+) site.

The protein belongs to the QueC family. The cofactor is Zn(2+).

The catalysed reaction is 7-carboxy-7-deazaguanine + NH4(+) + ATP = 7-cyano-7-deazaguanine + ADP + phosphate + H2O + H(+). It functions in the pathway purine metabolism; 7-cyano-7-deazaguanine biosynthesis. In terms of biological role, catalyzes the ATP-dependent conversion of 7-carboxy-7-deazaguanine (CDG) to 7-cyano-7-deazaguanine (preQ(0)). The protein is 7-cyano-7-deazaguanine synthase of Vesicomyosocius okutanii subsp. Calyptogena okutanii (strain HA).